Here is a 1072-residue protein sequence, read N- to C-terminus: DNA-directed RNA polymerase subunit beta (1072 aa).

The protein belongs to the RNA polymerase beta chain family. As to quaternary structure, in plastids the minimal PEP RNA polymerase catalytic core is composed of four subunits: alpha, beta, beta', and beta''. When a (nuclear-encoded) sigma factor is associated with the core the holoenzyme is formed, which can initiate transcription.

It localises to the plastid. Its subcellular location is the chloroplast. The catalysed reaction is RNA(n) + a ribonucleoside 5'-triphosphate = RNA(n+1) + diphosphate. Functionally, DNA-dependent RNA polymerase catalyzes the transcription of DNA into RNA using the four ribonucleoside triphosphates as substrates. The sequence is that of DNA-directed RNA polymerase subunit beta from Capsella bursa-pastoris (Shepherd's purse).